The chain runs to 542 residues: Glucans biosynthesis protein G (542 aa).

Residues methionine 1 to alanine 34 form the signal peptide.

The protein belongs to the OpgD/OpgG family.

The protein resides in the periplasm. It functions in the pathway glycan metabolism; osmoregulated periplasmic glucan (OPG) biosynthesis. Involved in the biosynthesis of osmoregulated periplasmic glucans (OPGs). This Shewanella baltica (strain OS223) protein is Glucans biosynthesis protein G.